A 478-amino-acid polypeptide reads, in one-letter code: Muscarinic acetylcholine receptor M4 (478 aa).

Residues 1–30 lie on the Extracellular side of the membrane; the sequence is MXNFTPVNGSSANQSVRLVTAAHNHLETVE. N-linked (GlcNAc...) asparagine glycans are attached at residues asparagine 8 and asparagine 13. The chain crosses the membrane as a helical span at residues 31–53; it reads MVFIATVTGSLSLVTVVGNILVM. Topologically, residues 54–67 are cytoplasmic; it reads LSIKVNRQLQTVNN. A helical transmembrane segment spans residues 68–88; it reads YFLFSLGCADLIIGAFSMNLY. The Extracellular segment spans residues 89 to 105; that stretch reads TLYIIKGYWPLGAVVCD. Cysteine 104 and cysteine 184 form a disulfide bridge. A helical transmembrane segment spans residues 106–127; the sequence is LWLALDYVVSNASVMNLLIISF. Residues 128-147 lie on the Cytoplasmic side of the membrane; it reads DRYFCVTKPLTYPARRTTKM. Residues 148-170 form a helical membrane-spanning segment; that stretch reads AGLMIAAAWVLSFVLWAPAILFW. Over 171-192 the chain is Extracellular; sequence QFVVGKRTVPDNQCFIQFLSNP. A helical membrane pass occupies residues 193 to 215; that stretch reads AVTFGTAIAAFYLPVVIMTVLYI. Over 216–400 the chain is Cytoplasmic; the sequence is HISLASRSRV…AARERKVTRT (185 aa). The tract at residues 271–333 is disordered; the sequence is LEEAPPPALP…APTLQPRTLN (63 aa). Positions 274–285 are enriched in pro residues; the sequence is APPPALPPPPRP. Residues 293–303 show a composition bias toward polar residues; sequence NESSSGSATQN. Low complexity predominate over residues 310–332; sequence TELSTAEATTPALPAPTLQPRTL. Residues 401–421 traverse the membrane as a helical segment; that stretch reads IFAILLAFILTWTPYNVMVLV. Residues 422 to 435 are Extracellular-facing; sequence NTFCQSCIPERVWS. The chain crosses the membrane as a helical span at residues 436-455; that stretch reads IGYWLCYVNSTINPACYALC. Residues 456–478 are Cytoplasmic-facing; the sequence is NATFKKTFRHLLLCQYRNIGTAR. Threonine 458, threonine 462, and threonine 476 each carry phosphothreonine.

Belongs to the G-protein coupled receptor 1 family. Muscarinic acetylcholine receptor subfamily. CHRM4 sub-subfamily.

Its subcellular location is the cell membrane. The protein localises to the postsynaptic cell membrane. In terms of biological role, the muscarinic acetylcholine receptor mediates various cellular responses, including inhibition of adenylate cyclase, breakdown of phosphoinositides and modulation of potassium channels through the action of G proteins. Primary transducing effect is inhibition of adenylate cyclase. This chain is Muscarinic acetylcholine receptor M4 (Chrm4), found in Rattus norvegicus (Rat).